The sequence spans 158 residues: Endoribonuclease YbeY (158 aa).

Zn(2+) contacts are provided by H119, H123, and D129.

It belongs to the endoribonuclease YbeY family. It depends on Zn(2+) as a cofactor.

It is found in the cytoplasm. Single strand-specific metallo-endoribonuclease involved in late-stage 70S ribosome quality control and in maturation of the 3' terminus of the 16S rRNA. This Chlamydia abortus (strain DSM 27085 / S26/3) (Chlamydophila abortus) protein is Endoribonuclease YbeY.